The following is a 501-amino-acid chain: uncharacterized protein (501 aa).

The 224-residue stretch at 14 to 237 folds into the BAR domain; that stretch reads EKFGFDRQKT…GFSKKRDNVN (224 aa). Threonine 285 bears the Phosphothreonine mark. Disordered stretches follow at residues 302-321 and 329-414; these read IASSNRTQHTEDNYNKDVSD and SAVD…RSYS. The span at 309 to 320 shows a compositional bias: basic and acidic residues; sequence QHTEDNYNKDVS. The segment covering 390–402 has biased composition (polar residues); sequence SQCNVSPSPSNIS. A Phosphoserine modification is found at serine 414. The SH3 domain maps to 421 to 487; it reads SSRKVVRMKY…PSNYCVPAHP (67 aa).

Its subcellular location is the cytoplasm. This is an uncharacterized protein from Schizosaccharomyces pombe (strain 972 / ATCC 24843) (Fission yeast).